Here is a 215-residue protein sequence, read N- to C-terminus: Cytochrome b6 (215 aa).

A helical transmembrane segment spans residues 32–52 (IFYCLGGITLTCFLVQVATGF). A heme c-binding site is contributed by cysteine 35. Residues histidine 86 and histidine 100 each coordinate heme b. Transmembrane regions (helical) follow at residues 90–110 (ASMM…TGGF), 116–136 (LTWV…VTGY), and 186–206 (LHTF…FLMI). Heme b contacts are provided by histidine 187 and histidine 202.

The protein belongs to the cytochrome b family. PetB subfamily. As to quaternary structure, the 4 large subunits of the cytochrome b6-f complex are cytochrome b6, subunit IV (17 kDa polypeptide, PetD), cytochrome f and the Rieske protein, while the 4 small subunits are PetG, PetL, PetM and PetN. The complex functions as a dimer. Heme b serves as cofactor. Heme c is required as a cofactor.

It localises to the plastid. It is found in the chloroplast thylakoid membrane. Functionally, component of the cytochrome b6-f complex, which mediates electron transfer between photosystem II (PSII) and photosystem I (PSI), cyclic electron flow around PSI, and state transitions. This Citrus sinensis (Sweet orange) protein is Cytochrome b6.